The sequence spans 72 residues: Translational regulator CsrA (72 aa).

This sequence belongs to the CsrA/RsmA family. Homodimer; the beta-strands of each monomer intercalate to form a hydrophobic core, while the alpha-helices form wings that extend away from the core.

Its subcellular location is the cytoplasm. Functionally, a translational regulator that binds mRNA to regulate translation initiation and/or mRNA stability. Usually binds in the 5'-UTR at or near the Shine-Dalgarno sequence preventing ribosome-binding, thus repressing translation. Its main target seems to be the major flagellin gene, while its function is anatagonized by FliW. In Clostridium botulinum (strain ATCC 19397 / Type A), this protein is Translational regulator CsrA.